Here is a 290-residue protein sequence, read N- to C-terminus: Inositol-1-monophosphatase (290 aa).

Positions 83, 104, 106, and 107 each coordinate Mg(2+). Residue E83 coordinates substrate. Substrate-binding positions include I106–T109, R206, and D235. A Mg(2+)-binding site is contributed by D235.

Belongs to the inositol monophosphatase superfamily. Mg(2+) is required as a cofactor.

The enzyme catalyses a myo-inositol phosphate + H2O = myo-inositol + phosphate. This is Inositol-1-monophosphatase (suhB) from Mycobacterium bovis (strain ATCC BAA-935 / AF2122/97).